A 367-amino-acid chain; its full sequence is Phospho-N-acetylmuramoyl-pentapeptide-transferase (367 aa).

10 consecutive transmembrane segments (helical) span residues 13–33 (ISGI…ALTL), 49–69 (LPLL…VPLL), 95–115 (MGGI…SNFA), 119–139 (LAVS…DWQI), 154–174 (LALQ…NQPA), 183–203 (WVSF…FVLV), 215–235 (IDGL…AIVA), 237–257 (TSPA…GFLA), 281–301 (AVAL…IFFV), and 347–367 (VSSF…IAPF).

It belongs to the glycosyltransferase 4 family. MraY subfamily. Requires Mg(2+) as cofactor.

It is found in the cell inner membrane. The catalysed reaction is UDP-N-acetyl-alpha-D-muramoyl-L-alanyl-gamma-D-glutamyl-meso-2,6-diaminopimeloyl-D-alanyl-D-alanine + di-trans,octa-cis-undecaprenyl phosphate = di-trans,octa-cis-undecaprenyl diphospho-N-acetyl-alpha-D-muramoyl-L-alanyl-D-glutamyl-meso-2,6-diaminopimeloyl-D-alanyl-D-alanine + UMP. Its pathway is cell wall biogenesis; peptidoglycan biosynthesis. Its function is as follows. Catalyzes the initial step of the lipid cycle reactions in the biosynthesis of the cell wall peptidoglycan: transfers peptidoglycan precursor phospho-MurNAc-pentapeptide from UDP-MurNAc-pentapeptide onto the lipid carrier undecaprenyl phosphate, yielding undecaprenyl-pyrophosphoryl-MurNAc-pentapeptide, known as lipid I. The chain is Phospho-N-acetylmuramoyl-pentapeptide-transferase from Trichormus variabilis (strain ATCC 29413 / PCC 7937) (Anabaena variabilis).